The chain runs to 432 residues: Adenosylhomocysteinase (432 aa).

Ser-2 is modified (N-acetylserine). Thr-57, Asp-131, and Glu-156 together coordinate substrate. At Ser-183 the chain carries Phosphoserine. The interval 183 to 350 is NAD binding; it reads SVTKSKFDNL…EGRLVNLGCA (168 aa). Residues Lys-186 and Asp-190 each contribute to the substrate site. Lys-186 carries the post-translational modification N6-(2-hydroxyisobutyryl)lysine. Residue Tyr-193 is modified to Phosphotyrosine.

This sequence belongs to the adenosylhomocysteinase family. In terms of assembly, homotetramer. Interaction with AHCYL1. NAD(+) is required as a cofactor.

The protein resides in the cytoplasm. Its subcellular location is the melanosome. It is found in the nucleus. The protein localises to the endoplasmic reticulum. It catalyses the reaction S-adenosyl-L-homocysteine + H2O = L-homocysteine + adenosine. Its pathway is amino-acid biosynthesis; L-homocysteine biosynthesis; L-homocysteine from S-adenosyl-L-homocysteine: step 1/1. Catalyzes the hydrolysis of S-adenosyl-L-homocysteine to form adenosine and homocysteine. Binds copper ions. The protein is Adenosylhomocysteinase (AHCY) of Sus scrofa (Pig).